A 273-amino-acid polypeptide reads, in one-letter code: Probable glycerophosphodiester phosphodiesterase GpdQ (273 aa).

7 residues coordinate Fe cation: Asp8, His10, Asp50, Asn80, His154, His194, and His196.

Belongs to the cyclic nucleotide phosphodiesterase class-III family. Fe(2+) is required as a cofactor.

The catalysed reaction is a sn-glycero-3-phosphodiester + H2O = an alcohol + sn-glycerol 3-phosphate + H(+). It carries out the reaction sn-glycero-3-phosphoethanolamine + H2O = ethanolamine + sn-glycerol 3-phosphate + H(+). In terms of biological role, catalyzes the hydrolysis of the 3'-5' phosphodiester bond of glycerophosphodiesters such as glycerophosphorylethanolamine (GPE), a typical phospholipid metabolite. The sequence is that of Probable glycerophosphodiester phosphodiesterase GpdQ from Arcobacter nitrofigilis (strain ATCC 33309 / DSM 7299 / CCUG 15893 / LMG 7604 / NCTC 12251 / CI) (Campylobacter nitrofigilis).